Here is a 31-residue protein sequence, read N- to C-terminus: MGISEVQVFLALIIALIPGILADRLGKELNK.

The helical transmembrane segment at 7 to 26 (QVFLALIIALIPGILADRLG) threads the bilayer.

This sequence belongs to the PsaM family.

It is found in the plastid. The protein localises to the chloroplast thylakoid membrane. The protein is Photosystem I reaction center subunit XII of Euglena deses.